The following is a 1019-amino-acid chain: MRYRLAWLLHPALPSTFRSVLGARLPPPERLCGFQKKTYSKMNNPAIKRIGNHITKSPEDKREYRGLELANGIKVLLISDPTTDKSSAALDVHIGSLSDPPNIAGLSHFCEHMLFLGTKKYPKENEYSQFLSEHAGSSNAFTSGEHTNYYFDVSHEHLEGALDRFAQFFLCPLFDESCKDREVNAVDSEHEKNVMNDAWRLFQLEKATGNPKHPFSKFGTGNKYTLETRPNQEGIDVRQELLKFHSAYYSSNLMAVCVLGRESLDDLTNLVVKLFSEVENKNVPLPEFPEHPFQEEHLKQLYKIVPIKDIRNLYVTFPIPDLQKYYKSNPGHYLGHLIGHEGPGSLLSELKSKGWVNTLVGGQKEGARGFMFFIINVDLTEEGLLHVEDIILHMFQYIQKLRAEGPQEWVFQECKDLNAVAFRFKDKERPRGYTSKIAGILHYYPLEEVLTAEYLLEEFRPDLIEMVLDKLRPENVRVAIVSKSFEGKTDRTEEWYGTQYKQEAIPDEVIKKWQNADLNGKFKLPTKNEFIPTNFEILPLEKEATPYPALIKDTAMSKLWFKQDDKFFLPKACLNFEFFSPFAYVDPLHCNMAYLYLELLKDSLNEYAYAAELAGLSYDLQNTIYGMYLSVKGYNDKQPILLKKIIEKMATFEIDEKRFEIIKEAYMRSLNNFRAEQPHQHAMYYLRLLMTEVAWTKDELKEALDDVTLPRLKAFIPQLLSRLHIEALLHGNITKQAALGIMQMVEDTLIEHAHTKPLLPSQLVRYREVQLPDRGWFVYQQRNEVHNNCGIEIYYQTDMQSTSENMFLELFCQIISEPCFNTLRTKEQLGYIVFSGPRRANGIQGLRFIIQSEKPPHYLESRVEAFLITMEKSIEDMTEEAFQKHIQALAIRRLDKPKKLSAECAKYWGEIISQQYNFDRDNTEVAYLKTLTKEDIIKFYKEMLAVDAPRRHKVSVHVLAREMDSCPVVGEFPCQNDINLSQAPALPQPEVIQNMTEFKRGLPLFPLVKPHINFMAAKL.

H108 is a Zn(2+) binding site. The active-site Proton acceptor is E111. Positions 112 and 189 each coordinate Zn(2+). K192 bears the N6-succinyllysine mark. Substrate is bound by residues 336-342 (HLIGHEG) and 359-363 (LVGGQ). R429 is an ATP binding site. K697 carries the N6-succinyllysine modification. The SlyX motif signature appears at 853-858 (EKPPHY). An ATP-binding site is contributed by 895–901 (DKPKKLS).

This sequence belongs to the peptidase M16 family. Homodimer. Can also form homotetramers. In terms of assembly, (Microbial infection) Interacts (via N-terminus) with varicella-zoster virus (VZV) envelope glycoprotein E (via N-terminus); the membrane-associated isoform may function as an entry receptor for this virus. Requires Zn(2+) as cofactor. In terms of processing, the N-terminus is blocked. In terms of tissue distribution, detected in brain and in cerebrospinal fluid (at protein level).

The protein resides in the cytoplasm. Its subcellular location is the cytosol. The protein localises to the cell membrane. It localises to the secreted. The enzyme catalyses Degradation of insulin, glucagon and other polypeptides. No action on proteins.. Activated by small peptides. Activated by ATP and GTP, and to a lesser extent by CTP, TTP and PPPi. Inhibited by bacitracin. In vitro modification of Cys residues impairs enzyme activity. Functionally, plays a role in the cellular breakdown of insulin, APP peptides, IAPP peptides, natriuretic peptides, glucagon, bradykinin, kallidin, and other peptides, and thereby plays a role in intercellular peptide signaling. Substrate binding induces important conformation changes, making it possible to bind and degrade larger substrates, such as insulin. Contributes to the regulation of peptide hormone signaling cascades and regulation of blood glucose homeostasis via its role in the degradation of insulin, glucagon and IAPP. Plays a role in the degradation and clearance of APP-derived amyloidogenic peptides that are secreted by neurons and microglia. Degrades the natriuretic peptides ANP, BNP and CNP, inactivating their ability to raise intracellular cGMP. Also degrades an aberrant frameshifted 40-residue form of NPPA (fsNPPA) which is associated with familial atrial fibrillation in heterozygous patients. Involved in antigen processing. Produces both the N terminus and the C terminus of MAGEA3-derived antigenic peptide (EVDPIGHLY) that is presented to cytotoxic T lymphocytes by MHC class I. Its function is as follows. (Microbial infection) The membrane-associated isoform acts as an entry receptor for varicella-zoster virus (VZV). The chain is Insulin-degrading enzyme from Homo sapiens (Human).